We begin with the raw amino-acid sequence, 466 residues long: UDP-N-acetylmuramoylalanine--D-glutamate ligase (466 aa).

Residue 115-121 (GTDGKTT) coordinates ATP.

This sequence belongs to the MurCDEF family.

The protein localises to the cytoplasm. It catalyses the reaction UDP-N-acetyl-alpha-D-muramoyl-L-alanine + D-glutamate + ATP = UDP-N-acetyl-alpha-D-muramoyl-L-alanyl-D-glutamate + ADP + phosphate + H(+). Its pathway is cell wall biogenesis; peptidoglycan biosynthesis. In terms of biological role, cell wall formation. Catalyzes the addition of glutamate to the nucleotide precursor UDP-N-acetylmuramoyl-L-alanine (UMA). In Chlorobium phaeobacteroides (strain BS1), this protein is UDP-N-acetylmuramoylalanine--D-glutamate ligase.